The primary structure comprises 1286 residues: 5-oxoprolinase (1286 aa).

A phosphoserine mark is found at serine 930 and serine 1077.

The protein belongs to the oxoprolinase family. As to quaternary structure, homodimer.

The protein resides in the cytoplasm. The catalysed reaction is 5-oxo-L-proline + ATP + 2 H2O = L-glutamate + ADP + phosphate + H(+). Catalyzes the cleavage of 5-oxo-L-proline to form L-glutamate coupled to the hydrolysis of ATP to ADP and inorganic phosphate. The sequence is that of 5-oxoprolinase (OXP1) from Saccharomyces cerevisiae (strain ATCC 204508 / S288c) (Baker's yeast).